The following is a 228-amino-acid chain: Ephrin-A5 (228 aa).

The N-terminal stretch at 1 to 20 (MLHVEMLTLLFLVLWMCVFS) is a signal peptide. One can recognise an Ephrin RBD domain in the interval 29 to 162 (ADRYAVYWNS…KLKVFVRPTN (134 aa)). N-linked (GlcNAc...) asparagine glycosylation occurs at N37. Cystine bridges form between C62–C102 and C90–C151. N162 is a glycosylation site (N-linked (GlcNAc...) asparagine; atypical). The tract at residues 186–205 (EPADDTVHESAEPSRGENAA) is disordered. A compositionally biased stretch (basic and acidic residues) spans 190–200 (DTVHESAEPSR). N203 carries the GPI-anchor amidated asparagine lipid modification. A propeptide spans 204 to 228 (AAQTPRIPSRLLAILLFLLAMLLTL) (removed in mature form).

It belongs to the ephrin family. As to quaternary structure, binds to the receptor tyrosine kinases EPHA2, EPHA3 and EPHB1. Forms a ternary EFNA5-EPHA3-ADAM10 complex mediating EFNA5 extracellular domain shedding by ADAM10 which regulates the EFNA5-EPHA3 complex internalization and function. Binds to EPHB2. Interacts with EPHA8; activates EPHA8. As to expression, expressed in myogenic progenitor cells.

It is found in the cell membrane. The protein resides in the membrane. It localises to the caveola. In terms of biological role, cell surface GPI-bound ligand for Eph receptors, a family of receptor tyrosine kinases which are crucial for migration, repulsion and adhesion during neuronal, vascular and epithelial development. Binds promiscuously Eph receptors residing on adjacent cells, leading to contact-dependent bidirectional signaling into neighboring cells. The signaling pathway downstream of the receptor is referred to as forward signaling while the signaling pathway downstream of the ephrin ligand is referred to as reverse signaling. Induces compartmentalized signaling within a caveolae-like membrane microdomain when bound to the extracellular domain of its cognate receptor. This signaling event requires the activity of the Fyn tyrosine kinase. Activates the EPHA3 receptor to regulate cell-cell adhesion and cytoskeletal organization. With the receptor EPHA2 may regulate lens fiber cells shape and interactions and be important for lens transparency maintenance. May function actively to stimulate axon fasciculation. The interaction of EFNA5 with EPHA5 also mediates communication between pancreatic islet cells to regulate glucose-stimulated insulin secretion. Cognate/functional ligand for EPHA7, their interaction regulates brain development modulating cell-cell adhesion and repulsion. The chain is Ephrin-A5 (Efna5) from Mus musculus (Mouse).